Reading from the N-terminus, the 1577-residue chain is Dynamin-binding protein (1577 aa).

Position 1 is an N-acetylmethionine (methionine 1). 3 SH3 domains span residues 2-61 (EPGS…IVTI), 66-126 (EGER…ELCL), and 145-204 (YSMG…LLGP). The interval 209-242 (DESVNAGSGDDSTLNDEVDVSPEEVESEGDEDDQ) is disordered. Positions 221 to 242 (TLNDEVDVSPEEVESEGDEDDQ) are enriched in acidic residues. The 60-residue stretch at 243-302 (QAGTYGIALYRFQALESNELDFEVGDKIRILGTLEDGWLEGRLKGKTGIFPHRFVKLCPS) folds into the SH3 4 domain. Disordered regions lie at residues 307–361 (ETMA…EEPL) and 375–437 (GQDE…SRQC). A compositionally biased stretch (polar residues) spans 400-410 (PDLSQEVNGIS). Serine 494 carries the post-translational modification Phosphoserine. Disordered stretches follow at residues 519–547 (PERPKRRPGLPDKEPATEITPASQGDNLD) and 590–681 (RGSS…SEYT). Low complexity predominate over residues 617–626 (TPTSTSPHLL). Residues 632-651 (KPGPPLVVRPSRPAPLPPPT) are compositionally biased toward pro residues. The segment covering 652-662 (QQRLNTASPKP) has biased composition (polar residues). The span at 672–681 (APEKEGSEYT) shows a compositional bias: basic and acidic residues. Residue serine 684 is modified to Phosphoserine. Residues 705–755 (LDMHTRAQEELNLLLEEKQDESLRAETLETLKSYESTIQSLNLELQQLREM) adopt a coiled-coil conformation. One can recognise a DH domain in the interval 784 to 967 (KRAKVVAELL…KEINANINEY (184 aa)). The region spanning 1008–1217 (LKHLTGFAPQ…LKASDREGNL (210 aa)) is the BAR domain. The SH3 5 domain maps to 1285–1348 (PPEKLFHVQR…YSSFLKPYNP (64 aa)). Residues 1353–1375 (SDSSVVSHSSTESEHSGSSPSFH) show a composition bias toward low complexity. 2 disordered regions span residues 1353 to 1381 (SDSSVVSHSSTESEHSGSSPSFHRQNSSS) and 1415 to 1510 (ETLG…LGSS). 2 stretches are compositionally biased toward polar residues: residues 1418 to 1428 (GVSSNTGNPET) and 1484 to 1497 (DQGSDSIKGTSRAC). Residues 1513-1576 (EGNQVYFAIY…PSNYIRKTEY (64 aa)) enclose the SH3 6 domain.

As to quaternary structure, binds DNM1 via its N-terminal SH3 domains. The C-terminal SH3 domain binds a complex containing actin, tubulin, Hsp70 and actin-regulatory proteins, such as ENAH, EVL, WIRE, CR16, WAVE1 and NAP1L1. Interacts with FASLG. Interacts (via SH3 domain 6) with WASL. Interacts (via SH3 domain 6) interacts with ENAH. Interacts (via C-terminal domain) with TJP1; required for the apical cell-cell junction localization of DNMBP. In terms of tissue distribution, widely expressed.

It is found in the cytoplasm. The protein localises to the golgi apparatus. The protein resides in the golgi stack. Its subcellular location is the cytoskeleton. It localises to the synapse. It is found in the cell junction. Its function is as follows. Plays a critical role as a guanine nucleotide exchange factor (GEF) for CDC42 in several intracellular processes associated with the actin and microtubule cytoskeleton. Regulates the structure of apical junctions in epithelial cells. Participates in the normal lumenogenesis of epithelial cell cysts by regulating spindle orientation. Plays a role in ciliogenesis. May play a role in membrane trafficking between the cell surface and the Golgi. This is Dynamin-binding protein from Rattus norvegicus (Rat).